We begin with the raw amino-acid sequence, 222 residues long: CEACAM1-like protein UL7 (222 aa).

N-linked (GlcNAc...) asparagine; by host glycosylation is found at asparagine 50, asparagine 56, asparagine 60, asparagine 71, asparagine 105, asparagine 109, asparagine 125, asparagine 132, asparagine 147, asparagine 164, asparagine 168, and asparagine 189. The chain crosses the membrane as a helical span at residues 193–213 (LALVGVVVFLVLIVVCIMGWW).

It belongs to the RL11 family. In terms of processing, highly glycosylated.

It is found in the secreted. Its subcellular location is the host cell membrane. Plays a role in modulating the host immune response and affecting host cytokine production. Structurally and functionally homolog of host CEACAM1, induces endothelial cell angiogenesis. This is CEACAM1-like protein UL7 (UL7) from Homo sapiens (Human).